Consider the following 443-residue polypeptide: uncharacterized protein (443 aa).

The tract at residues 1–21 (MQSVTPPPTQQGKPDPTNSDM) is disordered. The segment covering 10 to 20 (QQGKPDPTNSD) has biased composition (polar residues).

This is an uncharacterized protein from Caenorhabditis elegans.